A 207-amino-acid polypeptide reads, in one-letter code: Octanoyltransferase (207 aa).

The BPL/LPL catalytic domain maps to 29–204 (DDTADELWLV…ELMVQLGDEE (176 aa)). Substrate is bound by residues 68-75 (RGGQVTYH), 135-137 (SLG), and 148-150 (GVA). The active-site Acyl-thioester intermediate is the cysteine 166.

It belongs to the LipB family.

Its subcellular location is the cytoplasm. The enzyme catalyses octanoyl-[ACP] + L-lysyl-[protein] = N(6)-octanoyl-L-lysyl-[protein] + holo-[ACP] + H(+). The protein operates within protein modification; protein lipoylation via endogenous pathway; protein N(6)-(lipoyl)lysine from octanoyl-[acyl-carrier-protein]: step 1/2. Functionally, catalyzes the transfer of endogenously produced octanoic acid from octanoyl-acyl-carrier-protein onto the lipoyl domains of lipoate-dependent enzymes. Lipoyl-ACP can also act as a substrate although octanoyl-ACP is likely to be the physiological substrate. The chain is Octanoyltransferase from Methylococcus capsulatus (strain ATCC 33009 / NCIMB 11132 / Bath).